The following is a 779-amino-acid chain: Probable ATP-dependent RNA helicase DHX40 (779 aa).

The segment at 1-53 is disordered; sequence MSRFPAVAGRAPRRQEEGERSRDLQEERPSAVCIADREEKGCTSQEGGTTPTF. The span at 13-41 shows a compositional bias: basic and acidic residues; it reads RRQEEGERSRDLQEERPSAVCIADREEKG. The span at 42-53 shows a compositional bias: polar residues; sequence CTSQEGGTTPTF. Positions 63–231 constitute a Helicase ATP-binding domain; that stretch reads IQAVRDNSFL…FGNCPIFDIP (169 aa). 76–83 lines the ATP pocket; it reads GNTGSGKT. The short motif at 173–176 is the DEAH box element; that stretch reads DEAH. In terms of domain architecture, Helicase C-terminal spans 263 to 442; it reads TMDIHLNEMA…SVVLTLKCLA (180 aa). Residues 737-779 are disordered; that stretch reads SKDVLKKMQRRNDDKSISDARARFLERKQQRTQDHSDTRKETG.

It belongs to the DEAD box helicase family. DEAH subfamily.

The enzyme catalyses ATP + H2O = ADP + phosphate + H(+). In terms of biological role, probable ATP-dependent RNA helicase. This is Probable ATP-dependent RNA helicase DHX40 (DHX40) from Pongo abelii (Sumatran orangutan).